A 258-amino-acid polypeptide reads, in one-letter code: Ribonuclease HII (258 aa).

Residues 1 to 20 form a disordered region; the sequence is MRVAPSGGPPHHHAMIRATP. Residues 10-20 show a composition bias toward basic residues; the sequence is PHHHAMIRATP. An RNase H type-2 domain is found at 48 to 236; that stretch reads WPVAGCDEVG…VVAARERHRA (189 aa). A divalent metal cation is bound by residues D54, E55, and D145.

The protein belongs to the RNase HII family. Mn(2+) is required as a cofactor. It depends on Mg(2+) as a cofactor.

The protein localises to the cytoplasm. The enzyme catalyses Endonucleolytic cleavage to 5'-phosphomonoester.. Endonuclease that specifically degrades the RNA of RNA-DNA hybrids. The polypeptide is Ribonuclease HII (Nitrobacter winogradskyi (strain ATCC 25391 / DSM 10237 / CIP 104748 / NCIMB 11846 / Nb-255)).